Here is a 115-residue protein sequence, read N- to C-terminus: Large ribosomal subunit protein bL20c (115 aa).

Belongs to the bacterial ribosomal protein bL20 family.

The protein resides in the plastid. It is found in the chloroplast. Functionally, binds directly to 23S ribosomal RNA and is necessary for the in vitro assembly process of the 50S ribosomal subunit. It is not involved in the protein synthesizing functions of that subunit. The sequence is that of Large ribosomal subunit protein bL20c from Nymphaea alba (White water-lily).